The following is a 273-amino-acid chain: Tyrosinase (273 aa).

Residues His-37, His-53, His-62, His-189, His-193, and His-215 each contribute to the Cu cation site.

Belongs to the tyrosinase family. Requires Cu(2+) as cofactor.

It carries out the reaction 2 L-dopa + O2 = 2 L-dopaquinone + 2 H2O. It catalyses the reaction L-tyrosine + O2 = L-dopaquinone + H2O. In terms of biological role, this is a copper-containing oxidase that functions in the formation of pigments such as melanins and other polyphenolic compounds. In Streptomyces lincolnensis, this protein is Tyrosinase (melC2).